A 546-amino-acid chain; its full sequence is Nuclear pore complex protein Nup58 (546 aa).

A run of 17 repeats spans residues 22–23, 36–37, 45–46, 64–65, 73–74, 82–83, 92–93, 101–102, 110–111, 119–120, 128–129, 137–138, 146–147, 155–156, 166–167, 197–198, and 199–200. Residues 22–200 form a 17 X 2 AA repeats of F-G region; the sequence is FGARPATTTA…TTAPPAFGFG (179 aa).

This sequence belongs to the NUP58 family. In terms of assembly, component of the nuclear pore complex. Interacts with Nup54. Interacts (via C-terminus) with fs(1)Yb; this interaction occurs in a RNA-independent manner. Interacts with sbr/nxf1. Interacts with Nxt1. Post-translationally, O-glycosylated; contains O-GlcNAc. O-GlcNAcylation increases with increasing ambient temperature.

Its subcellular location is the nucleus. It is found in the nuclear pore complex. In terms of biological role, component of the nuclear pore complex, a complex required for the trafficking across the nuclear membrane. Together with Nup54, required for transposable element silencing regulation in ovarian follicle cells. By interacting with the nuclear (Nxf1/Nxt1) and cytosolic (fs(1)Yb) components of the flamenco (flam) transcripts processing pathway, enables export and subsequent piRNA production. This is Nuclear pore complex protein Nup58 from Drosophila melanogaster (Fruit fly).